Reading from the N-terminus, the 122-residue chain is Large ribosomal subunit protein uL18 (122 aa).

This sequence belongs to the universal ribosomal protein uL18 family. In terms of assembly, part of the 50S ribosomal subunit; part of the 5S rRNA/L5/L18/L25 subcomplex. Contacts the 5S and 23S rRNAs.

Functionally, this is one of the proteins that bind and probably mediate the attachment of the 5S RNA into the large ribosomal subunit, where it forms part of the central protuberance. This chain is Large ribosomal subunit protein uL18, found in Prochlorococcus marinus (strain MIT 9301).